Consider the following 601-residue polypeptide: Probable Xaa-Pro aminopeptidase P (601 aa).

Residues aspartate 398, aspartate 409, glutamate 507, and glutamate 521 each contribute to the Mn(2+) site.

Belongs to the peptidase M24B family. The cofactor is Mn(2+).

It carries out the reaction Release of any N-terminal amino acid, including proline, that is linked to proline, even from a dipeptide or tripeptide.. In terms of biological role, catalyzes the removal of a penultimate prolyl residue from the N-termini of peptides. The chain is Probable Xaa-Pro aminopeptidase P (ampp) from Sclerotinia sclerotiorum (strain ATCC 18683 / 1980 / Ss-1) (White mold).